We begin with the raw amino-acid sequence, 98 residues long: Protein Vpr (98 aa).

The interval 1–42 (MEQLPEDQGPQREPYNEWTLEILEELKREAVRHFPRDWLHQL) is homooligomerization. Phosphoserine; by host occurs at positions 79 and 98.

The protein belongs to the HIV-1 VPR protein family. Homooligomer, may form homodimer. Interacts with p6-gag region of the Pr55 Gag precursor protein through a (Leu-X-X)4 motif near the C-terminus of the P6gag protein. Interacts with host UNG. May interact with host RAD23A/HHR23A. Interacts with host VPRBP/DCAF1, leading to hijack the CUL4A-RBX1-DDB1-DCAF1/VPRBP complex, mediating ubiquitination of host proteins such as TERT and ZGPAT and arrest of the cell cycle in G2 phase. Phosphorylated on several residues by host. These phosphorylations regulate VPR activity for the nuclear import of the HIV-1 pre-integration complex.

Its subcellular location is the virion. The protein resides in the host nucleus. The protein localises to the host extracellular space. During virus replication, may deplete host UNG protein, and incude G2-M cell cycle arrest. Acts by targeting specific host proteins for degradation by the 26S proteasome, through association with the cellular CUL4A-DDB1 E3 ligase complex by direct interaction with host VPRPB/DCAF-1. Cell cycle arrest reportedly occurs within hours of infection and is not blocked by antiviral agents, suggesting that it is initiated by the VPR carried into the virion. Additionally, VPR induces apoptosis in a cell cycle dependent manner suggesting that these two effects are mechanistically linked. Detected in the serum and cerebrospinal fluid of AIDS patient, VPR may also induce cell death to bystander cells. Functionally, during virus entry, plays a role in the transport of the viral pre-integration (PIC) complex to the host nucleus. This function is crucial for viral infection of non-dividing macrophages. May act directly at the nuclear pore complex, by binding nucleoporins phenylalanine-glycine (FG)-repeat regions. This Pan troglodytes (Chimpanzee) protein is Protein Vpr.